The following is a 223-amino-acid chain: UPF0441 protein KPN78578_33850 (223 aa).

Residues 165-223 (SYGAAQPGRTMNVPKTAMAPKPATTTTVTRGGFGESVAKQSTMQRSAAGSTSSSRSMGG) form a disordered region. Low complexity-rich tracts occupy residues 177 to 193 (VPKT…TTVT) and 209 to 223 (RSAA…SMGG).

This sequence belongs to the UPF0441 family.

The protein is UPF0441 protein KPN78578_33850 of Klebsiella pneumoniae subsp. pneumoniae (strain ATCC 700721 / MGH 78578).